The sequence spans 131 residues: D-ribose pyranase (131 aa).

Residue H20 is the Proton donor of the active site. Residues D28, H98, and 120-122 (YAN) contribute to the substrate site.

Belongs to the RbsD / FucU family. RbsD subfamily. In terms of assembly, homodecamer.

The protein localises to the cytoplasm. The catalysed reaction is beta-D-ribopyranose = beta-D-ribofuranose. Its pathway is carbohydrate metabolism; D-ribose degradation; D-ribose 5-phosphate from beta-D-ribopyranose: step 1/2. Functionally, catalyzes the interconversion of beta-pyran and beta-furan forms of D-ribose. This Clostridium perfringens (strain 13 / Type A) protein is D-ribose pyranase.